The chain runs to 470 residues: Cell division protein FtsP (470 aa).

A signal peptide (tat-type signal) is located at residues 1-27 (MSLSRRQFIQASGIALCAGAVPLKASA). The region spanning 68–164 (WGINGRYLGP…NGLAGMWLVE (97 aa)) is the Plastocyanin-like domain.

It belongs to the FtsP family. In terms of processing, exported by the Tat system. The position of the signal peptide cleavage has been experimentally proven. Can also be exported by the Sec system.

It is found in the periplasm. Its function is as follows. Cell division protein that is required for growth during stress conditions. May be involved in protecting or stabilizing the divisomal assembly under conditions of stress. In Escherichia coli (strain K12), this protein is Cell division protein FtsP.